The primary structure comprises 830 residues: uncharacterized protein (830 aa).

Positions 1–12 (MEKASKNKESGV) are enriched in basic and acidic residues. The segment at 1–61 (MEKASKNKES…SIKSKNKKKT (61 aa)) is disordered. A compositionally biased stretch (polar residues) spans 15–25 (ANNSFLQNFGV). The Helicase ATP-binding domain occupies 249–433 (TVSKSSASGG…YSLVKFLHIN (185 aa)). 262–269 (DDMGLGKT) contacts ATP. The DEAH box motif lies at 384 to 387 (DEAH). One can recognise a Helicase C-terminal domain in the interval 662-816 (EEDDTVRGLR…KSVFTSKKLT (155 aa)). Serine 712 is subject to Phosphoserine.

Belongs to the SNF2/RAD54 helicase family.

It localises to the nucleus. This is an uncharacterized protein from Schizosaccharomyces pombe (strain 972 / ATCC 24843) (Fission yeast).